Consider the following 89-residue polypeptide: Neurotoxin beta-KTx 52.1 (89 aa).

A signal peptide spans 1 to 20 (MKQYIFFLALIVLTATFAEA). A propeptide spanning residues 21 to 39 (GKKTEILDKVKKVFSKAKD) is cleaved from the precursor. One can recognise a BetaSPN-type CS-alpha/beta domain in the interval 53-89 (ELGCPFIDKWCEDHCDSKKLVGKCENFDCSCVKLGGK). Intrachain disulfides connect Cys56–Cys76, Cys63–Cys81, and Cys67–Cys83.

Belongs to the long chain scorpion toxin family. Class 2 subfamily. As to expression, expressed by the venom gland.

Its subcellular location is the secreted. Its function is as follows. Inhibits voltage-gated potassium channel. The chain is Neurotoxin beta-KTx 52.1 from Lychas mucronatus (Chinese swimming scorpion).